A 311-amino-acid chain; its full sequence is Phosphoribosylaminoimidazole-succinocarboxamide synthase (311 aa).

This sequence belongs to the SAICAR synthetase family.

The enzyme catalyses 5-amino-1-(5-phospho-D-ribosyl)imidazole-4-carboxylate + L-aspartate + ATP = (2S)-2-[5-amino-1-(5-phospho-beta-D-ribosyl)imidazole-4-carboxamido]succinate + ADP + phosphate + 2 H(+). The protein operates within purine metabolism; IMP biosynthesis via de novo pathway; 5-amino-1-(5-phospho-D-ribosyl)imidazole-4-carboxamide from 5-amino-1-(5-phospho-D-ribosyl)imidazole-4-carboxylate: step 1/2. The protein is Phosphoribosylaminoimidazole-succinocarboxamide synthase of Azoarcus sp. (strain BH72).